We begin with the raw amino-acid sequence, 426 residues long: Crinkler effector protein 4 (426 aa).

Positions 20-57 (VEIDDSAKVSKLKKVIKEENPATITCDAKDLQLFLAKK) are LQLFLAK domain. The segment at 59-107 (DAWLDGAGAAAVELDEHGHPQGCVQMDPTLWVKNPKHFGDNFQPGEGQV) is DWL domain. Positions 108–114 (HVLVVVP) match the HVLVXXP motif motif. The segment at 115–426 (EGVVGSASET…RSIPTLSYFS (312 aa)) is effector domain.

It belongs to the Crinkler effector family.

The protein resides in the secreted. The protein localises to the host nucleus. In terms of biological role, secreted effector that is critical to pathogenesis by suppressing plant immune responsess. Promotes Phytophthora infection by suppressing the H(2)O(2) accumulation and callose deposition. May induce cell death by regulating expression of cell death-related genes. In Phytophthora capsici, this protein is Crinkler effector protein 4.